Here is a 137-residue protein sequence, read N- to C-terminus: Phosphoribosyl-AMP cyclohydrolase (137 aa).

Mg(2+) is bound at residue aspartate 84. Residue cysteine 85 participates in Zn(2+) binding. 2 residues coordinate Mg(2+): aspartate 86 and aspartate 88. Residues cysteine 101 and cysteine 108 each contribute to the Zn(2+) site.

Belongs to the PRA-CH family. As to quaternary structure, homodimer. Mg(2+) serves as cofactor. Requires Zn(2+) as cofactor.

Its subcellular location is the cytoplasm. The enzyme catalyses 1-(5-phospho-beta-D-ribosyl)-5'-AMP + H2O = 1-(5-phospho-beta-D-ribosyl)-5-[(5-phospho-beta-D-ribosylamino)methylideneamino]imidazole-4-carboxamide. It participates in amino-acid biosynthesis; L-histidine biosynthesis; L-histidine from 5-phospho-alpha-D-ribose 1-diphosphate: step 3/9. Catalyzes the hydrolysis of the adenine ring of phosphoribosyl-AMP. This is Phosphoribosyl-AMP cyclohydrolase from Prosthecochloris aestuarii (strain DSM 271 / SK 413).